The sequence spans 238 residues: tRNA (guanine-N(1)-)-methyltransferase (238 aa).

Residue 132–137 coordinates S-adenosyl-L-methionine; the sequence is IGDYVL.

The protein belongs to the RNA methyltransferase TrmD family. As to quaternary structure, homodimer.

The protein resides in the cytoplasm. It catalyses the reaction guanosine(37) in tRNA + S-adenosyl-L-methionine = N(1)-methylguanosine(37) in tRNA + S-adenosyl-L-homocysteine + H(+). Specifically methylates guanosine-37 in various tRNAs. This Nitrobacter hamburgensis (strain DSM 10229 / NCIMB 13809 / X14) protein is tRNA (guanine-N(1)-)-methyltransferase.